Reading from the N-terminus, the 97-residue chain is Zinc metalloproteinase-disintegrin-like bothrojarin-4 (97 aa).

In terms of domain architecture, Disintegrin spans 4 to 90 (PPVCGNYFVE…DCPTDRFRRN (87 aa)). Ca(2+) is bound by residues Val-6, Asn-9, Phe-11, Glu-13, Glu-16, and Asp-19. 7 disulfides stabilise this stretch: Cys-7/Cys-36, Cys-18/Cys-31, Cys-20/Cys-26, Cys-30/Cys-53, Cys-44/Cys-50, Cys-49/Cys-75, and Cys-62/Cys-82. Asn-32 carries an N-linked (GlcNAc...) asparagine glycan. Residues 68–70 (KCD) carry the D/ECD-tripeptide; atypical (KCD) motif.

The protein belongs to the venom metalloproteinase (M12B) family. P-III subfamily. P-IIIa sub-subfamily. As to quaternary structure, monomer. It depends on Zn(2+) as a cofactor. As to expression, expressed by the venom gland.

Its subcellular location is the secreted. Functionally, the hemorrhagic metalloproteinase-disintegrin-like bothrojarin-1 is a potent inhibitor of collagen-induced platelet aggregation by blockage of alpha-2/beta-1 (ITGA2/ITGB1) integrin. It does not present any fibrinogen-clotting activity. This is Zinc metalloproteinase-disintegrin-like bothrojarin-4 from Bothrops jararaca (Jararaca).